The following is a 113-amino-acid chain: Insulin (113 aa).

An N-terminal signal peptide occupies residues 1 to 24 (MAALWLQAFSLLVLMMVSWPGSQA). 3 disulfides stabilise this stretch: C32–C99, C44–C112, and C98–C103. Positions 56 to 90 (DVDPLLGFLPPKAGGAVVQGGENEVTFKDQMEMMV) are cleaved as a propeptide — c peptide.

Belongs to the insulin family. As to quaternary structure, heterodimer of a B chain and an A chain linked by two disulfide bonds.

It localises to the secreted. Functionally, insulin decreases blood glucose concentration. It increases cell permeability to monosaccharides, amino acids and fatty acids. It accelerates glycolysis, the pentose phosphate cycle, and glycogen synthesis in liver. This Oreochromis niloticus (Nile tilapia) protein is Insulin (ins).